Here is a 122-residue protein sequence, read N- to C-terminus: Small ribosomal subunit protein uS13 (122 aa).

Residues 98-122 (VRGQRTHTNARTRKGPAKAIAGKKK) form a disordered region.

This sequence belongs to the universal ribosomal protein uS13 family. In terms of assembly, part of the 30S ribosomal subunit. Forms a loose heterodimer with protein S19. Forms two bridges to the 50S subunit in the 70S ribosome.

Its function is as follows. Located at the top of the head of the 30S subunit, it contacts several helices of the 16S rRNA. In the 70S ribosome it contacts the 23S rRNA (bridge B1a) and protein L5 of the 50S subunit (bridge B1b), connecting the 2 subunits; these bridges are implicated in subunit movement. Contacts the tRNAs in the A and P-sites. This Ruegeria pomeroyi (strain ATCC 700808 / DSM 15171 / DSS-3) (Silicibacter pomeroyi) protein is Small ribosomal subunit protein uS13.